Consider the following 389-residue polypeptide: Flagellar P-ring protein (389 aa).

The N-terminal stretch at 1 to 33 (MRPLVAARRRAAACCALAACMLALAFAPAAARA) is a signal peptide.

This sequence belongs to the FlgI family. As to quaternary structure, the basal body constitutes a major portion of the flagellar organelle and consists of four rings (L,P,S, and M) mounted on a central rod.

Its subcellular location is the periplasm. It is found in the bacterial flagellum basal body. Its function is as follows. Assembles around the rod to form the L-ring and probably protects the motor/basal body from shearing forces during rotation. The protein is Flagellar P-ring protein of Burkholderia mallei (strain ATCC 23344).